The chain runs to 438 residues: GTPase Der (438 aa).

EngA-type G domains follow at residues 4 to 168 and 176 to 351; these read PIVA…PAVP and LKVA…EAAN. GTP is bound by residues 10–17, 57–61, 120–123, 182–189, 229–233, and 294–297; these read GRPNVGKS, DTGGI, NKVE, DTAGM, and NKWD. The KH-like domain maps to 352–436; sequence RRVATGTLNA…PIRLIFRRGR (85 aa).

This sequence belongs to the TRAFAC class TrmE-Era-EngA-EngB-Septin-like GTPase superfamily. EngA (Der) GTPase family. In terms of assembly, associates with the 50S ribosomal subunit.

Its function is as follows. GTPase that plays an essential role in the late steps of ribosome biogenesis. The protein is GTPase Der of Moorella thermoacetica (strain ATCC 39073 / JCM 9320).